The sequence spans 181 residues: Ribosome maturation factor RimP (181 aa).

Belongs to the RimP family.

The protein resides in the cytoplasm. Functionally, required for maturation of 30S ribosomal subunits. This chain is Ribosome maturation factor RimP, found in Mycolicibacterium smegmatis (strain ATCC 700084 / mc(2)155) (Mycobacterium smegmatis).